Here is a 336-residue protein sequence, read N- to C-terminus: MTQAQNYVIPPGSKVLVTGANGYIASHIVKALLDLGYLVRGTVRTPMPWLAEYFERQCGLGRFELIVVSDFQQPDAFDESVKGVSGVIHVAQGLPSSTAAETVKSATAYTVNGVINLFKAASTQRTIQRVVLTSSIVAAGYPTGKGFKLDADSWDESLEQASKDGTTVPIYRACKIEGERQAWKWVEKNQPHFELNSVLPWLTLGKILHPNIGGSTMGYVSGLLRGDTTPFKFLPLPWFVDVEDTARLHAIALLNPSVRSERLFATAAPFTWGDVIEILKRIQPNNARIPAAPIQEEPTLGDVVPAARAEKLLRETFGQLGWTPLEVSLESGIARE.

Tyrosine 171 provides a ligand contact to NADP(+).

The protein belongs to the NAD(P)-dependent epimerase/dehydratase family. Dihydroflavonol-4-reductase subfamily.

The protein operates within secondary metabolite biosynthesis; terpenoid biosynthesis. Functionally, ketoreductase; part of the gene cluster that mediates the biosynthesis of andrastins, meroterpenoid compounds that exhibit inhibitory activity against ras farnesyltransferase, suggesting that they could be promising leads for antitumor agents. The first step of the pathway is the synthesis of 3,5-dimethylorsellinic acid (DMOA) by the polyketide synthase adrD via condensation of one acetyl-CoA starter unit with 3 malonyl-CoA units and 2 methylations. DMAO is then converted to farnesyl-DMAO by the prenyltransferase adrG. The methyltransferase adrK catalyzes the methylation of the carboxyl group of farnesyl-DMAO to farnesyl-DMAO methyl ester which is further converted to epoxyfarnesyl-DMAO methyl ester by the FAD-dependent monooxygenase adrH. The terpene cyclase adrI then catalyzes the carbon skeletal rearrangement to generate the andrastin E, the first compound in the pathway having the andrastin scaffold, with the tetracyclic ring system. The post-cyclization tailoring enzymes adrF, adrE, adrJ, and adrA, are involved in the conversion of andrastin E into andrastin A. The short chain dehydrogenase adrF is responsible for the oxidation of the C-3 a hydroxyl group of andrastin E to yield the corresponding ketone, andrastin D. The ketoreductase adrE stereoselectively reduces the carbonyl moiety to reverse the stereochemistry of the C-3 position to yield andrastin F. The acetyltransferase adrJ is the acetyltransferase that attaches the acetyl group to the C-3 hydroxyl group of andrastin F to yield andrastin C. Finally, the cytochrome P450 monooxygenase adrA catalyzes two sequential oxidation reactions of the C-23 methyl group, to generate the corresponding alcohol andrastin B, and aldehyde andrastin A. The sequence is that of Ketoreductase adrE from Penicillium roqueforti.